A 122-amino-acid chain; its full sequence is Large ribosomal subunit protein uL14c (122 aa).

It belongs to the universal ribosomal protein uL14 family. In terms of assembly, part of the 50S ribosomal subunit.

The protein localises to the plastid. Its subcellular location is the chloroplast. Functionally, binds to 23S rRNA. The chain is Large ribosomal subunit protein uL14c from Guizotia abyssinica (Niger).